The chain runs to 260 residues: Global transcriptional regulator CodY (260 aa).

The GAF domain stretch occupies residues 1 to 159 (MPNLLEKTRK…SSTVVGIQLL (159 aa)). A DNA-binding region (H-T-H motif) is located at residues 207–226 (ASVIADRIGITRSVIVNALR).

The protein belongs to the CodY family.

Its subcellular location is the cytoplasm. DNA-binding global transcriptional regulator which is involved in the adaptive response to starvation and acts by directly or indirectly controlling the expression of numerous genes in response to nutrient availability. During rapid exponential growth, CodY is highly active and represses genes whose products allow adaptation to nutrient depletion. The polypeptide is Global transcriptional regulator CodY (Streptococcus equi subsp. zooepidemicus (strain H70)).